Here is a 404-residue protein sequence, read N- to C-terminus: Probable tRNA sulfurtransferase (404 aa).

The region spanning 60–165 (TAVAESLKQV…EEAAYLSYET (106 aa)) is the THUMP domain. ATP-binding positions include 183 to 184 (ML), 208 to 209 (HF), arginine 265, glycine 287, and glutamine 296.

It belongs to the ThiI family.

Its subcellular location is the cytoplasm. It catalyses the reaction [ThiI sulfur-carrier protein]-S-sulfanyl-L-cysteine + a uridine in tRNA + 2 reduced [2Fe-2S]-[ferredoxin] + ATP + H(+) = [ThiI sulfur-carrier protein]-L-cysteine + a 4-thiouridine in tRNA + 2 oxidized [2Fe-2S]-[ferredoxin] + AMP + diphosphate. It carries out the reaction [ThiS sulfur-carrier protein]-C-terminal Gly-Gly-AMP + S-sulfanyl-L-cysteinyl-[cysteine desulfurase] + AH2 = [ThiS sulfur-carrier protein]-C-terminal-Gly-aminoethanethioate + L-cysteinyl-[cysteine desulfurase] + A + AMP + 2 H(+). Its pathway is cofactor biosynthesis; thiamine diphosphate biosynthesis. Functionally, catalyzes the ATP-dependent transfer of a sulfur to tRNA to produce 4-thiouridine in position 8 of tRNAs, which functions as a near-UV photosensor. Also catalyzes the transfer of sulfur to the sulfur carrier protein ThiS, forming ThiS-thiocarboxylate. This is a step in the synthesis of thiazole, in the thiamine biosynthesis pathway. The sulfur is donated as persulfide by IscS. This is Probable tRNA sulfurtransferase from Streptococcus pneumoniae serotype 19F (strain G54).